The following is a 91-amino-acid chain: Small ribosomal subunit protein bS16 (91 aa).

This sequence belongs to the bacterial ribosomal protein bS16 family.

The sequence is that of Small ribosomal subunit protein bS16 from Staphylococcus epidermidis (strain ATCC 35984 / DSM 28319 / BCRC 17069 / CCUG 31568 / BM 3577 / RP62A).